Reading from the N-terminus, the 87-residue chain is Putative regulatory protein BH2513 (87 aa).

It belongs to the RemA family.

The chain is Putative regulatory protein BH2513 from Halalkalibacterium halodurans (strain ATCC BAA-125 / DSM 18197 / FERM 7344 / JCM 9153 / C-125) (Bacillus halodurans).